The chain runs to 110 residues: Coiled-coil-helix-coiled-coil-helix domain-containing protein 5 (110 aa).

An N-acetylmethionine modification is found at methionine 1. CHCH domains are found at residues alanine 9–arginine 52 and arginine 55–serine 97. 4 consecutive short sequence motifs (cx9C motif) follow at residues cysteine 12–cysteine 22, cysteine 34–cysteine 44, cysteine 58–cysteine 68, and cysteine 79–cysteine 89. 4 disulfides stabilise this stretch: cysteine 12–cysteine 44, cysteine 22–cysteine 34, cysteine 58–cysteine 89, and cysteine 68–cysteine 79.

As to quaternary structure, monomer.

It localises to the mitochondrion intermembrane space. The polypeptide is Coiled-coil-helix-coiled-coil-helix domain-containing protein 5 (Chchd5) (Mus musculus (Mouse)).